The following is a 228-amino-acid chain: 7-cyano-7-deazaguanine synthase (228 aa).

8–18 (LSGGLDSTTCL) lines the ATP pocket. Residues C188, C198, C201, and C204 each coordinate Zn(2+).

This sequence belongs to the QueC family. Zn(2+) serves as cofactor.

It catalyses the reaction 7-carboxy-7-deazaguanine + NH4(+) + ATP = 7-cyano-7-deazaguanine + ADP + phosphate + H2O + H(+). It functions in the pathway purine metabolism; 7-cyano-7-deazaguanine biosynthesis. In terms of biological role, catalyzes the ATP-dependent conversion of 7-carboxy-7-deazaguanine (CDG) to 7-cyano-7-deazaguanine (preQ(0)). The polypeptide is 7-cyano-7-deazaguanine synthase (Legionella pneumophila subsp. pneumophila (strain Philadelphia 1 / ATCC 33152 / DSM 7513)).